The chain runs to 256 residues: Glycerol-3-phosphate acyltransferase (256 aa).

Transmembrane regions (helical) follow at residues 2 to 22 (FPYL…SVLW), 58 to 78 (LAVA…AIGL), 90 to 110 (SYFI…WFKF), 123 to 143 (LIVV…IFAF), 153 to 173 (IIGT…GVMG), and 211 to 231 (FADG…ILVV).

Belongs to the PlsY family. In terms of assembly, probably interacts with PlsX.

It localises to the cell membrane. The enzyme catalyses an acyl phosphate + sn-glycerol 3-phosphate = a 1-acyl-sn-glycero-3-phosphate + phosphate. It functions in the pathway lipid metabolism; phospholipid metabolism. Its function is as follows. Catalyzes the transfer of an acyl group from acyl-phosphate (acyl-PO(4)) to glycerol-3-phosphate (G3P) to form lysophosphatidic acid (LPA). This enzyme utilizes acyl-phosphate as fatty acyl donor, but not acyl-CoA or acyl-ACP. The sequence is that of Glycerol-3-phosphate acyltransferase from Mesoplasma florum (strain ATCC 33453 / NBRC 100688 / NCTC 11704 / L1) (Acholeplasma florum).